Consider the following 254-residue polypeptide: Ribosomal RNA small subunit methyltransferase G (254 aa).

A disordered region spans residues 1–21 (MPEGDGVPRETPSPSVVPESP). Low complexity predominate over residues 9–21 (RETPSPSVVPESP). S-adenosyl-L-methionine is bound by residues Gly-90, Leu-95, 142–143 (AE), and Arg-157. Residues 230-254 (GPLRAATAPAPPGAAKRRPGKGNRR) are disordered. The segment covering 244-254 (AKRRPGKGNRR) has biased composition (basic residues).

It belongs to the methyltransferase superfamily. RNA methyltransferase RsmG family.

It localises to the cytoplasm. Its function is as follows. Specifically methylates the N7 position of guanine in position 518 of 16S rRNA. The sequence is that of Ribosomal RNA small subunit methyltransferase G from Kineococcus radiotolerans (strain ATCC BAA-149 / DSM 14245 / SRS30216).